Here is a 127-residue protein sequence, read N- to C-terminus: MGKAAAPRALPENEAKAVARMLRVSPQKLNLVAQLIRGKKVANALADLQFSRKRIAVEVRKCLESAIANAENNHDLDVDDLVVKEAYVGKALVLKRFHARARGRGARILKPFANLTIVVREVRAEAA.

It belongs to the universal ribosomal protein uL22 family. As to quaternary structure, part of the 50S ribosomal subunit.

This protein binds specifically to 23S rRNA; its binding is stimulated by other ribosomal proteins, e.g. L4, L17, and L20. It is important during the early stages of 50S assembly. It makes multiple contacts with different domains of the 23S rRNA in the assembled 50S subunit and ribosome. Functionally, the globular domain of the protein is located near the polypeptide exit tunnel on the outside of the subunit, while an extended beta-hairpin is found that lines the wall of the exit tunnel in the center of the 70S ribosome. This is Large ribosomal subunit protein uL22 from Methylobacterium sp. (strain 4-46).